A 176-amino-acid chain; its full sequence is Large ribosomal subunit protein uL30 (176 aa).

This sequence belongs to the universal ribosomal protein uL30 family. Part of the 50S ribosomal subunit.

The chain is Large ribosomal subunit protein uL30 from Pyrobaculum arsenaticum (strain DSM 13514 / JCM 11321 / PZ6).